The following is a 386-amino-acid chain: Patatin-17 (386 aa).

Residues 1–23 (MATTKSFLILIFMILATTSSTFA) form the signal peptide. The region spanning 32–229 (LSIDGGGIRG…TVADPALLSI (198 aa)) is the PNPLA domain. The GXGXXG signature appears at 36-41 (GGGIRG). Positions 75 to 79 (GTSTG) match the GXSXG motif. Residue serine 77 is the Nucleophile of the active site. N-linked (GlcNAc...) asparagine glycosylation occurs at asparagine 202. Aspartate 215 acts as the Proton acceptor in catalysis. The DGA/G motif lies at 215-217 (DGA). Residues 321–384 (ENALTGTTTE…DRKKLRANKA (64 aa)) are a coiled coil.

This sequence belongs to the patatin family.

Its subcellular location is the vacuole. Functionally, non-specific lipolytic acyl hydrolase (LAH), an activity which is thought to be involved in the response of tubers to pathogens. Catalyzes the non-specific hydrolysis of phospholipids, glycolipids, sulfolipids, and mono- and diacylglycerols includng p-nitrophenyl caprate. Confers resistance to southern corn rootworm (SCRW). In Solanum cardiophyllum (Heartleaf nightshade), this protein is Patatin-17.